The sequence spans 98 residues: Co-chaperonin GroES (98 aa).

The protein belongs to the GroES chaperonin family. In terms of assembly, heptamer of 7 subunits arranged in a ring. Interacts with the chaperonin GroEL.

The protein resides in the cytoplasm. Together with the chaperonin GroEL, plays an essential role in assisting protein folding. The GroEL-GroES system forms a nano-cage that allows encapsulation of the non-native substrate proteins and provides a physical environment optimized to promote and accelerate protein folding. GroES binds to the apical surface of the GroEL ring, thereby capping the opening of the GroEL channel. In Beutenbergia cavernae (strain ATCC BAA-8 / DSM 12333 / CCUG 43141 / JCM 11478 / NBRC 16432 / NCIMB 13614 / HKI 0122), this protein is Co-chaperonin GroES.